The sequence spans 685 residues: DNA ligase (685 aa).

NAD(+) is bound by residues 48 to 52 (DAEYD), 97 to 98 (SL), and glutamate 131. The active-site N6-AMP-lysine intermediate is the lysine 133. Residues arginine 154, glutamate 190, lysine 304, and lysine 328 each contribute to the NAD(+) site. Zn(2+)-binding residues include cysteine 422, cysteine 425, cysteine 440, and cysteine 445. The region spanning 603-685 (PEEGPLSGRR…RLLSGEERPG (83 aa)) is the BRCT domain.

This sequence belongs to the NAD-dependent DNA ligase family. LigA subfamily. It depends on Mg(2+) as a cofactor. Requires Mn(2+) as cofactor.

It catalyses the reaction NAD(+) + (deoxyribonucleotide)n-3'-hydroxyl + 5'-phospho-(deoxyribonucleotide)m = (deoxyribonucleotide)n+m + AMP + beta-nicotinamide D-nucleotide.. Functionally, DNA ligase that catalyzes the formation of phosphodiester linkages between 5'-phosphoryl and 3'-hydroxyl groups in double-stranded DNA using NAD as a coenzyme and as the energy source for the reaction. It is essential for DNA replication and repair of damaged DNA. The chain is DNA ligase from Rubrobacter xylanophilus (strain DSM 9941 / JCM 11954 / NBRC 16129 / PRD-1).